Reading from the N-terminus, the 519-residue chain is UPF0053 protein bbp_300 (519 aa).

The next 7 membrane-spanning stretches (helical) occupy residues 13-35 (LLTL…AILS), 48-70 (LIGL…WMVT), 80-102 (YFSF…FKAT), 123-145 (AGFW…DAII), 150-172 (TINN…LIAS), 185-207 (VVVL…ALGF), and 212-231 (GYLY…NQIA). CBS domains are found at residues 311–373 (MTPR…IIDF) and 374–434 (SSTT…DADE).

This sequence belongs to the UPF0053 family.

The protein localises to the cell membrane. The polypeptide is UPF0053 protein bbp_300 (Buchnera aphidicola subsp. Baizongia pistaciae (strain Bp)).